We begin with the raw amino-acid sequence, 85 residues long: Cytochrome c6 (85 aa).

Heme c contacts are provided by Cys-14, Cys-17, His-18, and Met-58.

It belongs to the cytochrome c family. PetJ subfamily. In terms of assembly, monomer. Post-translationally, binds 1 heme c group covalently per subunit.

It localises to the cellular thylakoid lumen. In terms of biological role, functions as an electron carrier between membrane-bound cytochrome b6-f and photosystem I in oxygenic photosynthesis. The chain is Cytochrome c6 (petJ) from Leptolyngbya boryana (Plectonema boryanum).